The primary structure comprises 410 residues: Beta-arrestin-2 (410 aa).

At Tyr-48 the chain carries Phosphotyrosine. Pro-176 and Pro-181 each carry hydroxyproline; by PHD2. The interval 241–410 (ADICLFSTAQ…KDDDCDDQFC (170 aa)) is interaction with TRAF6. Position 361 is a phosphoserine (Ser-361). The interaction with AP2B1 stretch occupies residues 378–410 (DTNYATDDDIVFEDFARLRLKGMKDDDCDDQFC). At Thr-383 the chain carries Phosphothreonine; by CaMK2. A [DE]-X(1,2)-F-X-X-[FL]-X-X-X-R motif motif is present at residues 386 to 396 (DIVFEDFARLR).

This sequence belongs to the arrestin family. As to quaternary structure, homooligomer; the self-association is mediated by InsP6-binding. Heterooligomer with ARRB1; the association is mediated by InsP6-binding. Interacts with ADRB2 and CHRM2. Interacts with PDE4A. Interacts with PDE4D. Interacts with MAPK10, MAPK1 and MAPK3. Interacts with DRD2. Interacts with FSHR. Interacts with CLTC. Interacts with HTR2C. Interacts with CCR5. Interacts with CXCR4. Interacts with SRC. Interacts with DUSP16; the interaction is interrupted by stimulation of AGTR1 and activation of MAPK10. Interacts with CHUK; the interaction is enhanced stimulation of ADRB2. Interacts with RELA. Interacts with MDM2; the interaction is enhanced by activation of GPCRs. Interacts with SLC9A5. Interacts with TRAF6. Interacts with IGF1R. Interacts with ENG. Interacts with KIR2DL1, KIR2DL3 and KIR2DL4. Interacts with LDLR. Interacts with AP2B1. Interacts with C5AR1. Interacts with RAF1. Interacts with MAP2K1. Interacts with MAPK1. Interacts with MAPK10; the interaction enhances MAPK10 activation by MAP3K5. Interacts with MAP2K4; the interaction is enhanced by presence of MAP3K5 and MAPK10. Interacts with MAP3K5. Interacts with AKT1. Interacts with IKBKB and MAP3K14. Interacts with SMO (activated). Interacts with GSK3A and GSK3B. Associates with protein phosphatase 2A (PP2A). Interacts with CXCR4; the interaction is dependent on C-terminal phosphorylation of CXCR4 and allows activation of MAPK1 and MAPK3. Interacts with GPR143. Interacts with HCK and CXCR1 (phosphorylated). Interacts with ACKR3 and ACKR4. Interacts with ARRDC1; the interaction is direct. Interacts with GPR61, GPR62 and GPR135. Interacts (via NACHT and LRR domains) with NLRP3; this interaction is direct and inducible by omega-3 polyunsaturated fatty acids (PUFAs). Interacts with FFAR4 (via C-terminus); this interaction is stimulated by long-chain fatty acids (LCFAs). Interacts with GPR35. Interacts with GPR84. Interacts with TIGIT; this interaction inhibits the NF-kappa-B pathway. Interacts with TGFBR3. Post-translationally, phosphorylated at Thr-383 in the cytoplasm; probably dephosphorylated at the plasma membrane. The phosphorylation does not regulate internalization and recycling of ADRB2, interaction with clathrin or AP2B1. In terms of processing, the ubiquitination status appears to regulate the formation and trafficking of beta-arrestin-GPCR complexes and signaling. Ubiquitination appears to occur GPCR-specific. Ubiquitinated by MDM2; the ubiquitination is required for rapid internalization of ADRB2. Deubiquitinated by USP33; the deubiquitination leads to a dissociation of the beta-arrestin-GPCR complex. Stimulation of a class A GPCR, such as ADRB2, induces transient ubiquitination and subsequently promotes association with USP33. Stimulation of a class B GPCR promotes a sustained ubiquitination. Deubiquitinated by USP20; allowing USP20 to deubiquitinate TRAF6 leading to inhibition of NF-kappa-B signaling. Hydroxylation by PHD2 modulates the rate of internalization by slowing down recruitment to the plasma membrane and inhibiting subsequent co-internalization with class A receptors. Predominantly localized in neuronal tissues and in the spleen.

The protein localises to the cytoplasm. It localises to the nucleus. It is found in the cell membrane. Its subcellular location is the membrane. The protein resides in the clathrin-coated pit. The protein localises to the cytoplasmic vesicle. Its function is as follows. Functions in regulating agonist-mediated G-protein coupled receptor (GPCR) signaling by mediating both receptor desensitization and resensitization processes. During homologous desensitization, beta-arrestins bind to the GPRK-phosphorylated receptor and sterically preclude its coupling to the cognate G-protein; the binding appears to require additional receptor determinants exposed only in the active receptor conformation. The beta-arrestins target many receptors for internalization by acting as endocytic adapters (CLASPs, clathrin-associated sorting proteins) and recruiting the GPRCs to the adapter protein 2 complex 2 (AP-2) in clathrin-coated pits (CCPs). However, the extent of beta-arrestin involvement appears to vary significantly depending on the receptor, agonist and cell type. Internalized arrestin-receptor complexes traffic to intracellular endosomes, where they remain uncoupled from G-proteins. Two different modes of arrestin-mediated internalization occur. Class A receptors, like ADRB2, OPRM1, ENDRA, D1AR and ADRA1B dissociate from beta-arrestin at or near the plasma membrane and undergo rapid recycling. Class B receptors, like AVPR2, AGTR1, NTSR1, TRHR and TACR1 internalize as a complex with arrestin and traffic with it to endosomal vesicles, presumably as desensitized receptors, for extended periods of time. Receptor resensitization then requires that receptor-bound arrestin is removed so that the receptor can be dephosphorylated and returned to the plasma membrane. Mediates endocytosis of CCR7 following ligation of CCL19 but not CCL21. Involved in internalization of P2RY1, P2RY4, P2RY6 and P2RY11 and ATP-stimulated internalization of P2RY2. Involved in phosphorylation-dependent internalization of OPRD1 and subsequent recycling or degradation. Involved in ubiquitination of IGF1R. Beta-arrestins function as multivalent adapter proteins that can switch the GPCR from a G-protein signaling mode that transmits short-lived signals from the plasma membrane via small molecule second messengers and ion channels to a beta-arrestin signaling mode that transmits a distinct set of signals that are initiated as the receptor internalizes and transits the intracellular compartment. Acts as a signaling scaffold for MAPK pathways such as MAPK1/3 (ERK1/2) and MAPK10 (JNK3). ERK1/2 and JNK3 activated by the beta-arrestin scaffold are largely excluded from the nucleus and confined to cytoplasmic locations such as endocytic vesicles, also called beta-arrestin signalosomes. Acts as a signaling scaffold for the AKT1 pathway. GPCRs for which the beta-arrestin-mediated signaling relies on both ARRB1 and ARRB2 (codependent regulation) include ADRB2, F2RL1 and PTH1R. For some GPCRs the beta-arrestin-mediated signaling relies on either ARRB1 or ARRB2 and is inhibited by the other respective beta-arrestin form (reciprocal regulation). Increases ERK1/2 signaling in AGTR1- and AVPR2-mediated activation (reciprocal regulation). Involved in CCR7-mediated ERK1/2 signaling involving ligand CCL19. Is involved in type-1A angiotensin II receptor/AGTR1-mediated ERK activity. Is involved in type-1A angiotensin II receptor/AGTR1-mediated MAPK10 activity. Is involved in dopamine-stimulated AKT1 activity in the striatum by disrupting the association of AKT1 with its negative regulator PP2A. Involved in AGTR1-mediated chemotaxis. Appears to function as signaling scaffold involved in regulation of MIP-1-beta-stimulated CCR5-dependent chemotaxis. Involved in attenuation of NF-kappa-B-dependent transcription in response to GPCR or cytokine stimulation by interacting with and stabilizing CHUK. Suppresses UV-induced NF-kappa-B-dependent activation by interacting with CHUK. The function is promoted by stimulation of ADRB2 and dephosphorylation of ARRB2. Involved in IL8-mediated granule release in neutrophils. Involved in p53/TP53-mediated apoptosis by regulating MDM2 and reducing the MDM2-mediated degradation of p53/TP53. May serve as nuclear messenger for GPCRs. Upon stimulation of OR1D2, may be involved in regulation of gene expression during the early processes of fertilization. Also involved in regulation of receptors other than GPCRs. Involved in endocytosis of TGFBR2 and TGFBR3 and down-regulates TGF-beta signaling such as NF-kappa-B activation. Involved in endocytosis of low-density lipoprotein receptor/LDLR. Involved in endocytosis of smoothened homolog/Smo, which also requires GRK2. Involved in endocytosis of SLC9A5. Involved in endocytosis of ENG and subsequent TGF-beta-mediated ERK activation and migration of epithelial cells. Involved in Toll-like receptor and IL-1 receptor signaling through the interaction with TRAF6 which prevents TRAF6 autoubiquitination and oligomerization required for activation of NF-kappa-B and JUN. Involved in insulin resistance by acting as insulin-induced signaling scaffold for SRC, AKT1 and INSR. Involved in regulation of inhibitory signaling of natural killer cells by recruiting PTPN6 and PTPN11 to KIR2DL1. Involved in the internalization of the atypical chemokine receptor ACKR3. Acts as an adapter protein coupling FFAR4 receptor to specific downstream signaling pathways, as well as mediating receptor endocytosis. During the activation step of NLRP3 inflammasome, directly associates with NLRP3 leading to inhibition of pro-inflammatory cytokine release and inhibition of inflammation. The chain is Beta-arrestin-2 (Arrb2) from Rattus norvegicus (Rat).